We begin with the raw amino-acid sequence, 242 residues long: MSGHSKWSNIQGRKNAQDAKRGKIFQKVSREIYMAAKAGGPDPAMNPALRLAVDKAKSANMPNDNIARAIKKASSAGEGEHYDEVTYEGYGPGGVAVLVHALTDNRNRTATNVRVAFTRNGGSLGETGSVNYMFDRKGYIVIKREDHAIEEDDMLEVVLEAGGEDIETSPEVFEIYTAPEDFTAVRDALEQAGYSLAQAELTMVPQTLLTLNDEQKAQLERLVDKLEDDDDVSEVFTSAENL.

Positions 1 to 14 (MSGHSKWSNIQGRK) are enriched in polar residues. A disordered region spans residues 1-22 (MSGHSKWSNIQGRKNAQDAKRG).

Belongs to the TACO1 family.

Its subcellular location is the cytoplasm. The sequence is that of Probable transcriptional regulatory protein EF_0663 from Enterococcus faecalis (strain ATCC 700802 / V583).